Consider the following 155-residue polypeptide: 6,7-dimethyl-8-ribityllumazine synthase (155 aa).

Residues Phe22, 57-59 (AYE), and 81-83 (SVI) contribute to the 5-amino-6-(D-ribitylamino)uracil site. 86–87 (GT) lines the (2S)-2-hydroxy-3-oxobutyl phosphate pocket. Catalysis depends on His88, which acts as the Proton donor. A 5-amino-6-(D-ribitylamino)uracil-binding site is contributed by Phe113. Arg127 provides a ligand contact to (2S)-2-hydroxy-3-oxobutyl phosphate.

Belongs to the DMRL synthase family. In terms of assembly, forms an icosahedral capsid composed of 60 subunits, arranged as a dodecamer of pentamers.

The catalysed reaction is (2S)-2-hydroxy-3-oxobutyl phosphate + 5-amino-6-(D-ribitylamino)uracil = 6,7-dimethyl-8-(1-D-ribityl)lumazine + phosphate + 2 H2O + H(+). It functions in the pathway cofactor biosynthesis; riboflavin biosynthesis; riboflavin from 2-hydroxy-3-oxobutyl phosphate and 5-amino-6-(D-ribitylamino)uracil: step 1/2. Catalyzes the formation of 6,7-dimethyl-8-ribityllumazine by condensation of 5-amino-6-(D-ribitylamino)uracil with 3,4-dihydroxy-2-butanone 4-phosphate. This is the penultimate step in the biosynthesis of riboflavin. In Photobacterium phosphoreum, this protein is 6,7-dimethyl-8-ribityllumazine synthase.